Consider the following 456-residue polypeptide: 3-isopropylmalate dehydratase large subunit (456 aa).

3 residues coordinate [4Fe-4S] cluster: Cys336, Cys396, and Cys399.

The protein belongs to the aconitase/IPM isomerase family. LeuC type 1 subfamily. In terms of assembly, heterodimer of LeuC and LeuD. [4Fe-4S] cluster is required as a cofactor.

It catalyses the reaction (2R,3S)-3-isopropylmalate = (2S)-2-isopropylmalate. It functions in the pathway amino-acid biosynthesis; L-leucine biosynthesis; L-leucine from 3-methyl-2-oxobutanoate: step 2/4. Its function is as follows. Catalyzes the isomerization between 2-isopropylmalate and 3-isopropylmalate, via the formation of 2-isopropylmaleate. The chain is 3-isopropylmalate dehydratase large subunit from Staphylococcus epidermidis (strain ATCC 12228 / FDA PCI 1200).